The following is a 218-amino-acid chain: Phosphatidylserine decarboxylase proenzyme (218 aa).

Catalysis depends on serine 187, which acts as the Schiff-base intermediate with substrate; via pyruvic acid. The residue at position 187 (serine 187) is a Pyruvic acid (Ser); by autocatalysis.

This sequence belongs to the phosphatidylserine decarboxylase family. PSD-A subfamily. Heterodimer of a large membrane-associated beta subunit and a small pyruvoyl-containing alpha subunit. It depends on pyruvate as a cofactor. In terms of processing, is synthesized initially as an inactive proenzyme. Formation of the active enzyme involves a self-maturation process in which the active site pyruvoyl group is generated from an internal serine residue via an autocatalytic post-translational modification. Two non-identical subunits are generated from the proenzyme in this reaction, and the pyruvate is formed at the N-terminus of the alpha chain, which is derived from the carboxyl end of the proenzyme. The post-translation cleavage follows an unusual pathway, termed non-hydrolytic serinolysis, in which the side chain hydroxyl group of the serine supplies its oxygen atom to form the C-terminus of the beta chain, while the remainder of the serine residue undergoes an oxidative deamination to produce ammonia and the pyruvoyl prosthetic group on the alpha chain.

Its subcellular location is the cell membrane. It catalyses the reaction a 1,2-diacyl-sn-glycero-3-phospho-L-serine + H(+) = a 1,2-diacyl-sn-glycero-3-phosphoethanolamine + CO2. Its pathway is phospholipid metabolism; phosphatidylethanolamine biosynthesis; phosphatidylethanolamine from CDP-diacylglycerol: step 2/2. Functionally, catalyzes the formation of phosphatidylethanolamine (PtdEtn) from phosphatidylserine (PtdSer). The sequence is that of Phosphatidylserine decarboxylase proenzyme from Geobacter metallireducens (strain ATCC 53774 / DSM 7210 / GS-15).